A 420-amino-acid polypeptide reads, in one-letter code: Transmembrane protease serine 11B-like protein (420 aa).

Residues 1–19 (MTVSKLRPVIASRKSFPPW) are Cytoplasmic-facing. A helical; Signal-anchor for type II membrane protein membrane pass occupies residues 20 to 40 (MIILGVLGVLAILGLIIGLLV). Topologically, residues 41–420 (HFLAVENKIY…RDWIASKTGI (380 aa)) are extracellular. The region spanning 48-165 (KIYYYQGSFK…GSLKLTEITK (118 aa)) is the SEA domain. N-linked (GlcNAc...) asparagine glycosylation is found at Asn111 and Asn146. A Peptidase S1 domain is found at 189–419 (ITGGSTAQKG…YRDWIASKTG (231 aa)). Cys214 and Cys230 are disulfide-bonded. The active-site Charge relay system is the His229. An N-linked (GlcNAc...) asparagine glycan is attached at Asn239. Asp274 functions as the Charge relay system in the catalytic mechanism. 2 cysteine pairs are disulfide-bonded: Cys339/Cys355 and Cys366/Cys395. Ser370 functions as the Charge relay system in the catalytic mechanism.

This sequence belongs to the peptidase S1 family.

The protein localises to the membrane. It localises to the cell membrane. With respect to regulation, inhibited by aprotinin, leupeptin, benzamidine, SERPINA1, SPINT1 and SPINT2. Its function is as follows. Serine protease. The polypeptide is Transmembrane protease serine 11B-like protein (Tmprss11bnl) (Rattus norvegicus (Rat)).